We begin with the raw amino-acid sequence, 916 residues long: Protein translocase subunit SecA (916 aa).

ATP contacts are provided by residues Q87, G105–T109, and D507. 4 residues coordinate Zn(2+): C900, C902, C911, and H912.

Belongs to the SecA family. Monomer and homodimer. Part of the essential Sec protein translocation apparatus which comprises SecA, SecYEG and auxiliary proteins SecDF-YajC and YidC. Zn(2+) serves as cofactor.

It is found in the cell inner membrane. It localises to the cytoplasm. It catalyses the reaction ATP + H2O + cellular proteinSide 1 = ADP + phosphate + cellular proteinSide 2.. In terms of biological role, part of the Sec protein translocase complex. Interacts with the SecYEG preprotein conducting channel. Has a central role in coupling the hydrolysis of ATP to the transfer of proteins into and across the cell membrane, serving both as a receptor for the preprotein-SecB complex and as an ATP-driven molecular motor driving the stepwise translocation of polypeptide chains across the membrane. The protein is Protein translocase subunit SecA of Neisseria meningitidis serogroup C (strain 053442).